Consider the following 144-residue polypeptide: Large ribosomal subunit protein uL15 (144 aa).

Residues 1–49 (MRLNTLSPAAGSKSAPKRVGRGIGSGLGKTAGRGHKGQKSRSGGGVRVG) are disordered. The segment covering 21-31 (RGIGSGLGKTA) has biased composition (gly residues).

It belongs to the universal ribosomal protein uL15 family. As to quaternary structure, part of the 50S ribosomal subunit.

Its function is as follows. Binds to the 23S rRNA. The sequence is that of Large ribosomal subunit protein uL15 from Shewanella frigidimarina (strain NCIMB 400).